A 333-amino-acid chain; its full sequence is D-threonate 4-phosphate dehydrogenase (333 aa).

Substrate-binding residues include H140 and T141. The a divalent metal cation site is built by H170, H214, and H270. Residues K278, N287, and R296 each contribute to the substrate site.

Belongs to the PdxA family. PdxA2 subfamily. In terms of assembly, homodimer. The cofactor is a divalent metal cation.

The catalysed reaction is 4-O-phospho-D-threonate + NAD(+) = dihydroxyacetone phosphate + CO2 + NADH. In terms of biological role, catalyzes the NAD-dependent oxidation and subsequent decarboxylation of D-threonate 4-phosphate to produce dihydroxyacetone phosphate (DHAP). Can also use 4-hydroxy-L-threonine 4-phosphate as substrate. The polypeptide is D-threonate 4-phosphate dehydrogenase (Cupriavidus necator (strain ATCC 17699 / DSM 428 / KCTC 22496 / NCIMB 10442 / H16 / Stanier 337) (Ralstonia eutropha)).